Reading from the N-terminus, the 557-residue chain is Thermosome subunit 2 (557 aa).

Residues 527 to 557 (DLSTGGDDDEEGGAPGGMGGMGGMGGMGGAM) are disordered. Positions 539–557 (GAPGGMGGMGGMGGMGGAM) are enriched in gly residues.

Belongs to the TCP-1 chaperonin family. In terms of assembly, the thermosome or CCT complex is a oligomeric complex of two octameric double-ring structures; the complex is probably a heterooligomer of CCT1, CCT2 and CCT3 with yet unknown stoichiometry.

Its function is as follows. Molecular chaperone that assists in the folding or refolding of nascent or denatured proteins along with ATP hydrolysis. ATPase activity is highest in thermosome assemblies containing CCT1:CCT2, followed by assemblies containing CCT1:CCT2:CCT3. Seems to contribute to thermosome ATPase activity. Not required for growth. This Haloferax volcanii (strain ATCC 29605 / DSM 3757 / JCM 8879 / NBRC 14742 / NCIMB 2012 / VKM B-1768 / DS2) (Halobacterium volcanii) protein is Thermosome subunit 2 (cct2).